The following is a 723-amino-acid chain: Lim and transglutaminase domain protein ltd-1 (723 aa).

An LIM zinc-binding domain is found at 5 to 72; the sequence is QHCNRCGKQV…SNHVPIAGPH (68 aa).

Belongs to the transglutaminase-like superfamily. Expressed in the Y and U rectal epithelial cells, in marginal cells of the terminal bulb and isthmus of the pharynx (at protein level).

It localises to the cytoplasm. Its subcellular location is the cytoskeleton. In terms of biological role, cytoskeleton-associated protein. May play a role in hypodermal cell development. The sequence is that of Lim and transglutaminase domain protein ltd-1 from Caenorhabditis elegans.